The primary structure comprises 79 residues: Probable Fe(2+)-trafficking protein (79 aa).

This sequence belongs to the Fe(2+)-trafficking protein family. As to quaternary structure, monomer.

Could be a mediator in iron transactions between iron acquisition and iron-requiring processes, such as synthesis and/or repair of Fe-S clusters in biosynthetic enzymes. In Blochmanniella floridana, this protein is Probable Fe(2+)-trafficking protein.